Consider the following 220-residue polypeptide: ATP-dependent Clp protease proteolytic subunit (220 aa).

The active-site Nucleophile is the Ser125. Residue His150 is part of the active site.

It belongs to the peptidase S14 family. As to quaternary structure, fourteen ClpP subunits assemble into 2 heptameric rings which stack back to back to give a disk-like structure with a central cavity, resembling the structure of eukaryotic proteasomes.

The protein resides in the cytoplasm. The enzyme catalyses Hydrolysis of proteins to small peptides in the presence of ATP and magnesium. alpha-casein is the usual test substrate. In the absence of ATP, only oligopeptides shorter than five residues are hydrolyzed (such as succinyl-Leu-Tyr-|-NHMec, and Leu-Tyr-Leu-|-Tyr-Trp, in which cleavage of the -Tyr-|-Leu- and -Tyr-|-Trp bonds also occurs).. Cleaves peptides in various proteins in a process that requires ATP hydrolysis. Has a chymotrypsin-like activity. Plays a major role in the degradation of misfolded proteins. The protein is ATP-dependent Clp protease proteolytic subunit of Bacteroides fragilis (strain YCH46).